Here is a 334-residue protein sequence, read N- to C-terminus: Biotin synthase (334 aa).

The 228-residue stretch at 54-281 (QAIQLSTLLS…KSYVRLSAGR (228 aa)) folds into the Radical SAM core domain. [4Fe-4S] cluster-binding residues include Cys69, Cys73, and Cys76. Residues Cys113, Cys144, Cys204, and Arg276 each contribute to the [2Fe-2S] cluster site.

This sequence belongs to the radical SAM superfamily. Biotin synthase family. Homodimer. [4Fe-4S] cluster serves as cofactor. [2Fe-2S] cluster is required as a cofactor.

The catalysed reaction is (4R,5S)-dethiobiotin + (sulfur carrier)-SH + 2 reduced [2Fe-2S]-[ferredoxin] + 2 S-adenosyl-L-methionine = (sulfur carrier)-H + biotin + 2 5'-deoxyadenosine + 2 L-methionine + 2 oxidized [2Fe-2S]-[ferredoxin]. It participates in cofactor biosynthesis; biotin biosynthesis; biotin from 7,8-diaminononanoate: step 2/2. In terms of biological role, catalyzes the conversion of dethiobiotin (DTB) to biotin by the insertion of a sulfur atom into dethiobiotin via a radical-based mechanism. The chain is Biotin synthase from Haemophilus ducreyi (strain 35000HP / ATCC 700724).